Reading from the N-terminus, the 185-residue chain is Orotate phosphoribosyltransferase (185 aa).

5-phospho-alpha-D-ribose 1-diphosphate-binding positions include arginine 98, lysine 99, lysine 102, histidine 104, and 128 to 136; that span reads EDVTTTGGS. Orotate-binding residues include threonine 132 and arginine 160.

It belongs to the purine/pyrimidine phosphoribosyltransferase family. PyrE subfamily. In terms of assembly, homodimer. The cofactor is Mg(2+).

The catalysed reaction is orotidine 5'-phosphate + diphosphate = orotate + 5-phospho-alpha-D-ribose 1-diphosphate. The protein operates within pyrimidine metabolism; UMP biosynthesis via de novo pathway; UMP from orotate: step 1/2. Functionally, catalyzes the transfer of a ribosyl phosphate group from 5-phosphoribose 1-diphosphate to orotate, leading to the formation of orotidine monophosphate (OMP). The protein is Orotate phosphoribosyltransferase of Bradyrhizobium sp. (strain BTAi1 / ATCC BAA-1182).